Here is a 92-residue protein sequence, read N- to C-terminus: Small ribosomal subunit protein bS20 (92 aa).

This sequence belongs to the bacterial ribosomal protein bS20 family.

Functionally, binds directly to 16S ribosomal RNA. The polypeptide is Small ribosomal subunit protein bS20 (Rickettsia africae (strain ESF-5)).